Reading from the N-terminus, the 333-residue chain is Olfactory receptor 1078 (333 aa).

The Extracellular portion of the chain corresponds to 1-25; it reads MDSSNRTRVSEFLLLGFVENKDLQP. N-linked (GlcNAc...) asparagine glycosylation is present at asparagine 5. A helical membrane pass occupies residues 26–50; it reads LIYGLFLSMYLVTVIGNISIIVAII. The Cytoplasmic segment spans residues 51–57; sequence SDPCLHT. The chain crosses the membrane as a helical span at residues 58 to 79; that stretch reads PMYFFLSNLSFVDICFISTTVP. Over 80–100 the chain is Extracellular; sequence KMLVNIQTQNNVITYAGCITQ. A disulfide bridge links cysteine 97 with cysteine 189. Residues 101–120 traverse the membrane as a helical segment; sequence IYFFLLFVELDNFLLTIMAY. Residues 121–139 are Cytoplasmic-facing; sequence DRYVAICHPMHYTVIMNYK. The helical transmembrane segment at 140–158 threads the bilayer; it reads LCGFLVLVSWIVSVLHALF. The Extracellular portion of the chain corresponds to 159–196; sequence QSLMMLALPFCTHLEIPHYFCEPNQVIQLTCSDAFLND. A helical membrane pass occupies residues 197-219; sequence LVIYFTLVLLATVPLAGIFYSYF. Topologically, residues 220–236 are cytoplasmic; sequence KIVSSICAISSVHGKYK. The helical transmembrane segment at 237–260 threads the bilayer; that stretch reads AFSTCASHLSVVSLFYCTGLGVYL. At 261–272 the chain is on the extracellular side; it reads SSAANNSSQASA. A helical transmembrane segment spans residues 273 to 292; it reads TASVMYTVVTPMVNPFIYSL. Residues 293-333 lie on the Cytoplasmic side of the membrane; that stretch reads RNKDVKSVLKKTLCEEVIRSPPSLLHFFLVLCHLPCFIFCY.

The protein belongs to the G-protein coupled receptor 1 family. In terms of tissue distribution, olfactory epithelium.

The protein localises to the cell membrane. In terms of biological role, odorant receptor. The chain is Olfactory receptor 1078 (Olr1078) from Rattus norvegicus (Rat).